The sequence spans 301 residues: HPr kinase/phosphorylase (301 aa).

Residues H134 and K155 contribute to the active site. ATP is bound at residue G149–S156. S156 is a binding site for Mg(2+). D173 acts as the Proton acceptor; for phosphorylation activity. Proton donor; for dephosphorylation activity in catalysis. Residues L196–N205 are important for the catalytic mechanism of both phosphorylation and dephosphorylation. Residue E197 participates in Mg(2+) binding. The active site involves R239. Residues P260–K265 are important for the catalytic mechanism of dephosphorylation.

It belongs to the HPrK/P family. Homohexamer. Mg(2+) is required as a cofactor.

It carries out the reaction [HPr protein]-L-serine + ATP = [HPr protein]-O-phospho-L-serine + ADP + H(+). The enzyme catalyses [HPr protein]-O-phospho-L-serine + phosphate + H(+) = [HPr protein]-L-serine + diphosphate. Its function is as follows. Catalyzes the ATP- as well as the pyrophosphate-dependent phosphorylation of a specific serine residue in HPr, a phosphocarrier protein of the phosphoenolpyruvate-dependent sugar phosphotransferase system (PTS). HprK/P also catalyzes the pyrophosphate-producing, inorganic phosphate-dependent dephosphorylation (phosphorolysis) of seryl-phosphorylated HPr (P-Ser-HPr). The two antagonistic activities of HprK/P are regulated by several intracellular metabolites, which change their concentration in response to the absence or presence of rapidly metabolisable carbon sources (glucose, fructose, etc.) in the growth medium. Therefore, by controlling the phosphorylation state of HPr, HPrK/P is a sensor enzyme that plays a major role in the regulation of carbon metabolism and sugar transport: it mediates carbon catabolite repression (CCR), and regulates PTS-catalyzed carbohydrate uptake and inducer exclusion. This chain is HPr kinase/phosphorylase, found in Malacoplasma penetrans (strain HF-2) (Mycoplasma penetrans).